Reading from the N-terminus, the 443-residue chain is COP9 signalosome complex subunit 2 (443 aa).

The tract at residues 1–275 (MSDMEDDFMC…DESGSPRRTT (275 aa)) is mediates interaction with NIF3L1. A PCI domain is found at 254 to 416 (AHTDFFEAFK…QLLELDHQKR (163 aa)).

Belongs to the CSN2 family. Component of the CSN complex, composed of COPS1/GPS1, COPS2, COPS3, COPS4, COPS5, COPS6, COPS7 (COPS7A or COPS7B), COPS8 and COPS9 isoform 1. In the complex, it probably interacts directly with COPS1, COPS4, COPS5, COPS6 and COPS7 (COPS7A or COPS7B). Specifically interacts with the ligand binding domain of the thyroid receptor (TR). Does not require the presence of thyroid hormone for its interaction. Interacts with CUL1 and CUL2. Interacts with IRF8/ICSBP1 and with nuclear receptors NR2F1 and NR0B1. Interacts with NIF3L1. In terms of processing, phosphorylated by CK2 and PKD kinases.

It localises to the cytoplasm. The protein resides in the nucleus. In terms of biological role, essential component of the COP9 signalosome complex (CSN), a complex involved in various cellular and developmental processes. The CSN complex is an essential regulator of the ubiquitin (Ubl) conjugation pathway by mediating the deneddylation of the cullin subunits of SCF-type E3 ligase complexes, leading to decrease the Ubl ligase activity of SCF-type complexes such as SCF, CSA or DDB2. The complex is also involved in phosphorylation of p53/TP53, c-jun/JUN, IkappaBalpha/NFKBIA, ITPK1 and IRF8/ICSBP, possibly via its association with CK2 and PKD kinases. CSN-dependent phosphorylation of TP53 and JUN promotes and protects degradation by the Ubl system, respectively. Involved in early stage of neuronal differentiation via its interaction with NIF3L1. The polypeptide is COP9 signalosome complex subunit 2 (COPS2) (Homo sapiens (Human)).